The chain runs to 346 residues: Holliday junction branch migration complex subunit RuvB (346 aa).

Positions 1–182 (MSEPARLISP…FGIPVRLSFY (182 aa)) are large ATPase domain (RuvB-L). ATP-binding positions include L21, R22, G63, K66, T67, T68, 129–131 (EDF), R172, Y182, and R219. T67 is a Mg(2+) binding site. The small ATPAse domain (RuvB-S) stretch occupies residues 183–253 (TVEELELIVR…IADEALTRLL (71 aa)). Residues 256 to 346 (NVGFDQLDKR…AQFRLFQEDN (91 aa)) are head domain (RuvB-H). 3 residues coordinate DNA: R292, R311, and R316.

Belongs to the RuvB family. As to quaternary structure, homohexamer. Forms an RuvA(8)-RuvB(12)-Holliday junction (HJ) complex. HJ DNA is sandwiched between 2 RuvA tetramers; dsDNA enters through RuvA and exits via RuvB. An RuvB hexamer assembles on each DNA strand where it exits the tetramer. Each RuvB hexamer is contacted by two RuvA subunits (via domain III) on 2 adjacent RuvB subunits; this complex drives branch migration. In the full resolvosome a probable DNA-RuvA(4)-RuvB(12)-RuvC(2) complex forms which resolves the HJ.

It is found in the cytoplasm. It catalyses the reaction ATP + H2O = ADP + phosphate + H(+). In terms of biological role, the RuvA-RuvB-RuvC complex processes Holliday junction (HJ) DNA during genetic recombination and DNA repair, while the RuvA-RuvB complex plays an important role in the rescue of blocked DNA replication forks via replication fork reversal (RFR). RuvA specifically binds to HJ cruciform DNA, conferring on it an open structure. The RuvB hexamer acts as an ATP-dependent pump, pulling dsDNA into and through the RuvAB complex. RuvB forms 2 homohexamers on either side of HJ DNA bound by 1 or 2 RuvA tetramers; 4 subunits per hexamer contact DNA at a time. Coordinated motions by a converter formed by DNA-disengaged RuvB subunits stimulates ATP hydrolysis and nucleotide exchange. Immobilization of the converter enables RuvB to convert the ATP-contained energy into a lever motion, pulling 2 nucleotides of DNA out of the RuvA tetramer per ATP hydrolyzed, thus driving DNA branch migration. The RuvB motors rotate together with the DNA substrate, which together with the progressing nucleotide cycle form the mechanistic basis for DNA recombination by continuous HJ branch migration. Branch migration allows RuvC to scan DNA until it finds its consensus sequence, where it cleaves and resolves cruciform DNA. This Rhizobium leguminosarum bv. trifolii (strain WSM2304) protein is Holliday junction branch migration complex subunit RuvB.